We begin with the raw amino-acid sequence, 243 residues long: Ribonuclease PH (243 aa).

Phosphate is bound by residues Arg-91 and 129 to 131 (GTR).

Belongs to the RNase PH family. Homohexameric ring arranged as a trimer of dimers.

It carries out the reaction tRNA(n+1) + phosphate = tRNA(n) + a ribonucleoside 5'-diphosphate. In terms of biological role, phosphorolytic 3'-5' exoribonuclease that plays an important role in tRNA 3'-end maturation. Removes nucleotide residues following the 3'-CCA terminus of tRNAs; can also add nucleotides to the ends of RNA molecules by using nucleoside diphosphates as substrates, but this may not be physiologically important. Probably plays a role in initiation of 16S rRNA degradation (leading to ribosome degradation) during starvation. The polypeptide is Ribonuclease PH (Burkholderia thailandensis (strain ATCC 700388 / DSM 13276 / CCUG 48851 / CIP 106301 / E264)).